A 630-amino-acid polypeptide reads, in one-letter code: Chaperone protein HtpG (630 aa).

Positions 1–327 are a; substrate-binding; the sequence is MSVETYKFDA…SEDLSLNISR (327 aa). Positions 328–551 are b; the sequence is ETLQHSPLID…EGSMDIRTER (224 aa). Basic and acidic residues predominate over residues 483-499; it reads TKTAKSSDTNNDGKDDT. A disordered region spans residues 483–504; the sequence is TKTAKSSDTNNDGKDDTSSSDD. Residues 552–630 are c; sequence FLIEQKQLSS…INFFIEKSVN (79 aa).

This sequence belongs to the heat shock protein 90 family. Homodimer.

It localises to the cytoplasm. Its function is as follows. Molecular chaperone. Has ATPase activity. This chain is Chaperone protein HtpG, found in Orientia tsutsugamushi (strain Boryong) (Rickettsia tsutsugamushi).